The chain runs to 333 residues: Methylosome protein WDR77 (333 aa).

7 WD repeats span residues 16–59 (CMEV…GAPN), 68–106 (QTEAGVTDVAWVSEKGILVASDSGAVELWEILEKESLLV), 113–152 (EHDDIVKTLSVFSDGTQAVSGGKDFSVKVWDLSQKAVLKS), 155–195 (AHSS…PATR), 199–240 (CASD…SAQT), 243–283 (VHSQ…VFRD), and 285–328 (SHRD…NLIA).

Heterotetramer; dimer of heterodimer with prmt5. Interacts with histone h2a and h4 and with nucleoplasmin. In terms of tissue distribution, detected in egg (at protein level).

It is found in the cytoplasm. It localises to the nucleus. Non-catalytic component of the 20S prmt5-containing methyltransferase complex, which modifies specific arginines to dimethylarginines in several spliceosomal Sm proteins and histones. Required for normal prmt5 methyltransferase activity. This chain is Methylosome protein WDR77, found in Xenopus laevis (African clawed frog).